Here is a 650-residue protein sequence, read N- to C-terminus: Acetoacetyl-coenzyme A synthetase (650 aa).

199–202 (YNGK) is a binding site for CoA. Residues 392 to 394 (GSP), Asp-504, Arg-519, and Arg-530 contribute to the ATP site. Val-546 serves as a coordination point for Mg(2+). Arg-587 is a CoA binding site. Lys-612 carries the post-translational modification N6-acetyllysine.

Belongs to the ATP-dependent AMP-binding enzyme family. It depends on Mg(2+) as a cofactor. Post-translationally, acetylated. Deacetylation by the SIR2-homolog deacetylase activates the enzyme.

The enzyme catalyses acetoacetate + ATP + CoA = acetoacetyl-CoA + AMP + diphosphate. It participates in biopolymer metabolism; poly-(R)-3-hydroxybutanoate degradation. Functionally, catalyzes the conversion of acetoacetate into acetoacetyl-CoA. Is involved in poly-3-hydroxybutyrate (PHB) degradation, which allows growth of R.meliloti on PHB cycle intermediates. The polypeptide is Acetoacetyl-coenzyme A synthetase (Rhizobium meliloti (strain 1021) (Ensifer meliloti)).